A 509-amino-acid polypeptide reads, in one-letter code: MDEYEAQLVAVEQALENTTDEQQREELSTLRTNLQELLALTRETEADQTAQQGDILDDELLRLKSELNELEEAAANVGATKNKDEEQQLKDLRAKYNALVGEKCSAPHEHSWGASSYHNALICGVDDEVIINRNSELDVRLRVLYINPTHCEMLPCNYYLEGECRFDEIRCRYSHGALVPGASIKSYIPPDFPRLARNCPVLAKMPDRLWHRGRVLCANFVEQTCRVRLDGQDHKERERDFQFEELFPLITEKEDELTSEDSSSSPHDESSDEIDSDMDDLEAAHRSRMVELSLFTFKPTEKLGAWEQYTRGIGSKLMEKMGYIHGTGLGSEGRGIVTPVSAQILPQGRSLDACMELREAANGDQDYFSVERKLKREQRRQNKANEKAYARETQRTDVFSFLNGSVLGGGESRHQGDQAAKKAKTNDLQQHSTKTLNVETVRVADDIRRKQRDIAKVKQSLDRNATDIQLQKRLHMQLQSQKQELATLQAHEHRLSKEQHTRKNKMFEF.

A C3H1-type zinc finger spans residues 155–178 (PCNYYLEGECRFDEIRCRYSHGAL). Positions 254 to 277 (EDELTSEDSSSSPHDESSDEIDSD) are disordered. The G-patch domain occupies 310–356 (TRGIGSKLMEKMGYIHGTGLGSEGRGIVTPVSAQILPQGRSLDACME). The tract at residues 407-430 (LGGGESRHQGDQAAKKAKTNDLQQ) is disordered. The segment covering 411 to 420 (ESRHQGDQAA) has biased composition (basic and acidic residues).

Its subcellular location is the nucleus. Transcription repressor. This chain is Zinc finger CCCH-type with G patch domain-containing protein, found in Drosophila pseudoobscura pseudoobscura (Fruit fly).